The sequence spans 502 residues: MALWRSSDNLVYLPPTPVSKVLSTDDYVTRTNIYYYAGTSRLLTVGHPYFPIPKSSTNKADVPKVSAFQYRVFRVRLPDPNKFGLPDARIYNPDAERLVWACTGVEVGRGQPLGVGLSGHPLYNKLDDTENSNIAHGDIGQDSRDNISLDNKQTQLCIVGCTPPMGEHWGKGTPCRQNTQQGDCPPLELITAPIQDGDMVDTGFGAMDFAVLQANKSDVPLDICQSTCKYPDYLGMAAEPYGDSMFFYLRKEQLFARHFFNRAGVAGDTIPETLYIKGQGNGRDVIGSAVYSPTPSGSMISSEAQLFNKPYWLRRAQGHNNGICWANQLFVTVVDTTRSTNMTLCVSTDSSATYDASKFKEYLRHGEEYDLQFIFQLCKVTLTPDIMAYLHTMNNSLLEDWNFGLTLPPSTSLEDTYRFISSSAITCQKDASPTTKEDPYAKLNFWEVDLKDRFSLDLSQFPLGRKFLMQLGVGARSSVSVRKRPASTTRGSSAAKRKRAKK.

Residues 480–502 (SVRKRPASTTRGSSAAKRKRAKK) form a disordered region.

This sequence belongs to the papillomaviridae L1 protein family. As to quaternary structure, self-assembles into homopentamers. The capsid has an icosahedral symmetry and consists of 72 capsomers, with each capsomer being a pentamer of L1. Interacts with the minor capsid protein L2; this interaction is necessary for viral genome encapsidation. Interacts with protein E2; this interaction enhances E2-dependent replication and transcription activation.

Its subcellular location is the virion. It is found in the host nucleus. Its function is as follows. Forms an icosahedral capsid with a T=7 symmetry and a 50 nm diameter. The capsid is composed of 72 pentamers linked to each other by disulfide bonds and associated with L2 proteins. Binds to heparan sulfate proteoglycans on cell surface of basal layer keratinocytes to provide initial virion attachment. This binding mediates a conformational change in the virus capsid that facilitates efficient infection. The virion enters the host cell via endocytosis. During virus trafficking, L1 protein dissociates from the viral DNA and the genomic DNA is released to the host nucleus. The virion assembly takes place within the cell nucleus. Encapsulates the genomic DNA together with protein L2. The chain is Major capsid protein L1 from Homo sapiens (Human).